The chain runs to 191 residues: Protein LURP-one-related 6 (191 aa).

It belongs to the LOR family.

In terms of biological role, might be related to the phospholipid scramblase and tubby-like superfamily of membrane tethered transcription factors. This Arabidopsis thaliana (Mouse-ear cress) protein is Protein LURP-one-related 6.